Here is a 296-residue protein sequence, read N- to C-terminus: tRNA dimethylallyltransferase (296 aa).

Gly-11–Thr-18 lines the ATP pocket. A substrate-binding site is contributed by Thr-13 to Thr-18. Positions Asp-36 to Gln-39 are interaction with substrate tRNA.

It belongs to the IPP transferase family. Monomer. The cofactor is Mg(2+).

It carries out the reaction adenosine(37) in tRNA + dimethylallyl diphosphate = N(6)-dimethylallyladenosine(37) in tRNA + diphosphate. In terms of biological role, catalyzes the transfer of a dimethylallyl group onto the adenine at position 37 in tRNAs that read codons beginning with uridine, leading to the formation of N6-(dimethylallyl)adenosine (i(6)A). The sequence is that of tRNA dimethylallyltransferase from Streptococcus agalactiae serotype Ia (strain ATCC 27591 / A909 / CDC SS700).